A 105-amino-acid chain; its full sequence is Ferredoxin-2 (105 aa).

The region spanning 4–94 (YQVEVIYQGQ…DLKIETHKED (91 aa)) is the 2Fe-2S ferredoxin-type domain. [2Fe-2S] cluster is bound by residues Cys-40, Cys-45, Cys-48, and Cys-78.

This sequence belongs to the 2Fe2S plant-type ferredoxin family. As to quaternary structure, forms a complex with heterodimeric ferredoxin-thioredoxin reductase (FTR) and thioredoxin. [2Fe-2S] cluster serves as cofactor.

Its function is as follows. Ferredoxins are iron-sulfur proteins that transfer electrons in a wide variety of metabolic reactions. This Synechococcus sp. (strain ATCC 27144 / PCC 6301 / SAUG 1402/1) (Anacystis nidulans) protein is Ferredoxin-2 (petF2).